The sequence spans 213 residues: Pyridoxine/pyridoxamine 5'-phosphate oxidase (213 aa).

FMN is bound by residues 60 to 65 (RMVLMK), 75 to 76 (YS), Lys82, and Gln104. Lys65 is a binding site for substrate. 2 residues coordinate substrate: Tyr122 and Arg126. FMN-binding positions include 139 to 140 (QS) and Trp184. 190–192 (RLH) contributes to the substrate binding site. Arg194 contributes to the FMN binding site.

The protein belongs to the pyridoxamine 5'-phosphate oxidase family. As to quaternary structure, homodimer. It depends on FMN as a cofactor.

It carries out the reaction pyridoxamine 5'-phosphate + O2 + H2O = pyridoxal 5'-phosphate + H2O2 + NH4(+). The enzyme catalyses pyridoxine 5'-phosphate + O2 = pyridoxal 5'-phosphate + H2O2. It participates in cofactor metabolism; pyridoxal 5'-phosphate salvage; pyridoxal 5'-phosphate from pyridoxamine 5'-phosphate: step 1/1. Its pathway is cofactor metabolism; pyridoxal 5'-phosphate salvage; pyridoxal 5'-phosphate from pyridoxine 5'-phosphate: step 1/1. Its function is as follows. Catalyzes the oxidation of either pyridoxine 5'-phosphate (PNP) or pyridoxamine 5'-phosphate (PMP) into pyridoxal 5'-phosphate (PLP). The sequence is that of Pyridoxine/pyridoxamine 5'-phosphate oxidase from Bradyrhizobium diazoefficiens (strain JCM 10833 / BCRC 13528 / IAM 13628 / NBRC 14792 / USDA 110).